The primary structure comprises 304 residues: UDP-N-acetylenolpyruvoylglucosamine reductase (304 aa).

The region spanning 33-198 (KVGGPVDILL…LRATFNLVNG (166 aa)) is the FAD-binding PCMH-type domain. The active site involves Arg177. The Proton donor role is filled by Ser227. Glu297 is a catalytic residue.

This sequence belongs to the MurB family. FAD is required as a cofactor.

The protein resides in the cytoplasm. The enzyme catalyses UDP-N-acetyl-alpha-D-muramate + NADP(+) = UDP-N-acetyl-3-O-(1-carboxyvinyl)-alpha-D-glucosamine + NADPH + H(+). It participates in cell wall biogenesis; peptidoglycan biosynthesis. Functionally, cell wall formation. This Clostridium beijerinckii (strain ATCC 51743 / NCIMB 8052) (Clostridium acetobutylicum) protein is UDP-N-acetylenolpyruvoylglucosamine reductase.